The following is a 338-amino-acid chain: Glycerol-3-phosphate dehydrogenase [NAD(P)+] (338 aa).

S13, W14, and K108 together coordinate NADPH. Residues K108, G139, and S141 each coordinate sn-glycerol 3-phosphate. A143 is a binding site for NADPH. Positions 194, 247, 257, 258, and 259 each coordinate sn-glycerol 3-phosphate. Catalysis depends on K194, which acts as the Proton acceptor. R258 contributes to the NADPH binding site. 2 residues coordinate NADPH: V282 and E284.

The protein belongs to the NAD-dependent glycerol-3-phosphate dehydrogenase family.

The protein resides in the cytoplasm. The catalysed reaction is sn-glycerol 3-phosphate + NAD(+) = dihydroxyacetone phosphate + NADH + H(+). It carries out the reaction sn-glycerol 3-phosphate + NADP(+) = dihydroxyacetone phosphate + NADPH + H(+). It functions in the pathway membrane lipid metabolism; glycerophospholipid metabolism. Its function is as follows. Catalyzes the reduction of the glycolytic intermediate dihydroxyacetone phosphate (DHAP) to sn-glycerol 3-phosphate (G3P), the key precursor for phospholipid synthesis. This chain is Glycerol-3-phosphate dehydrogenase [NAD(P)+], found in Streptococcus pyogenes serotype M28 (strain MGAS6180).